A 289-amino-acid chain; its full sequence is Acetyl-coenzyme A carboxylase carboxyl transferase subunit beta (289 aa).

The CoA carboxyltransferase N-terminal domain maps to 34 to 289 (MWVKCNKCGE…KLINMHQNSF (256 aa)). Zn(2+) is bound by residues cysteine 38, cysteine 41, cysteine 57, and cysteine 60. Residues 38–60 (CNKCGEILYQNDLEKNYMVCNLC) form a C4-type zinc finger.

It belongs to the AccD/PCCB family. Acetyl-CoA carboxylase is a heterohexamer composed of biotin carboxyl carrier protein (AccB), biotin carboxylase (AccC) and two subunits each of ACCase subunit alpha (AccA) and ACCase subunit beta (AccD). Zn(2+) is required as a cofactor.

It localises to the cytoplasm. It catalyses the reaction N(6)-carboxybiotinyl-L-lysyl-[protein] + acetyl-CoA = N(6)-biotinyl-L-lysyl-[protein] + malonyl-CoA. It functions in the pathway lipid metabolism; malonyl-CoA biosynthesis; malonyl-CoA from acetyl-CoA: step 1/1. Its function is as follows. Component of the acetyl coenzyme A carboxylase (ACC) complex. Biotin carboxylase (BC) catalyzes the carboxylation of biotin on its carrier protein (BCCP) and then the CO(2) group is transferred by the transcarboxylase to acetyl-CoA to form malonyl-CoA. The sequence is that of Acetyl-coenzyme A carboxylase carboxyl transferase subunit beta from Clostridium botulinum (strain ATCC 19397 / Type A).